The chain runs to 113 residues: Small ribosomal subunit protein bS16 (113 aa).

The segment at 84-113 (PKPAYTEQPKKSAPKKRAQERAAAAAAAAA) is disordered.

Belongs to the bacterial ribosomal protein bS16 family.

This Gluconacetobacter diazotrophicus (strain ATCC 49037 / DSM 5601 / CCUG 37298 / CIP 103539 / LMG 7603 / PAl5) protein is Small ribosomal subunit protein bS16.